Reading from the N-terminus, the 435-residue chain is Glutamyl-tRNA reductase (435 aa).

Residues 49-52 (TCNR), Ser-118, 123-125 (EPQ), and Gln-129 each bind substrate. The active-site Nucleophile is the Cys-50. 203–208 (GAGETI) is an NADP(+) binding site.

The protein belongs to the glutamyl-tRNA reductase family. Homodimer.

The enzyme catalyses (S)-4-amino-5-oxopentanoate + tRNA(Glu) + NADP(+) = L-glutamyl-tRNA(Glu) + NADPH + H(+). The protein operates within porphyrin-containing compound metabolism; protoporphyrin-IX biosynthesis; 5-aminolevulinate from L-glutamyl-tRNA(Glu): step 1/2. Its function is as follows. Catalyzes the NADPH-dependent reduction of glutamyl-tRNA(Glu) to glutamate 1-semialdehyde (GSA). The chain is Glutamyl-tRNA reductase from Glaesserella parasuis serovar 5 (strain SH0165) (Haemophilus parasuis).